Here is a 1788-residue protein sequence, read N- to C-terminus: Protein Shroom3 (1788 aa).

Disordered regions lie at residues 1–25 (MMQVSQGTIGSPWHQAYHSSSSTSD), 146–174 (EVNSSSVKNRNYSRQPAYNRHSIGPHGRL), 225–263 (KAAGLHSTNTSSNAAQQPKHVHGDGHLHPVLERSPESSP), 321–367 (GAKS…KQEG), 382–401 (PDISTSSLTNDRNDQQPLRL), 469–488 (NIASSSHNKMDERSNRQADH), 498–548 (TVHA…GNKL), 727–768 (EISP…VTPT), 793–821 (TAEQKKRSYSEPEKMNEVGASESESAPLT), 876–915 (TGRRPSSQETRLLKERSQSTYFSGSIMDNQSMTSTSSMNS), 1011–1067 (SRRH…SASN), 1086–1133 (SFKN…PETK), 1171–1263 (KRGK…SEAE), 1303–1324 (DTESFSGTFVPPSPPPFPPPSL), 1404–1467 (VPAP…AKSQ), and 1507–1538 (ALKEKNQKRKAKKQIDNIIAPESEXKEEKRET). Polar residues-rich tracts occupy residues 147-161 (VNSSSVKNRNYSRQP) and 230-240 (HSTNTSSNAAQ). Basic and acidic residues-rich tracts occupy residues 245–259 (VHGDGHLHPVLERSP) and 357–366 (SVKEREKKQE). The segment covering 476 to 488 (NKMDERSNRQADH) has biased composition (basic and acidic residues). Residues 708 to 811 (VKDAQCKVLE…SEPEKMNEVG (104 aa)) enclose the ASD1 domain. The span at 793–808 (TAEQKKRSYSEPEKMN) shows a compositional bias: basic and acidic residues. Over residues 893 to 903 (QSTYFSGSIMD) the composition is skewed to polar residues. A compositionally biased stretch (low complexity) spans 904 to 915 (NQSMTSTSSMNS). Polar residues-rich tracts occupy residues 1055 to 1067 (EVGNKTSYASASN), 1100 to 1124 (ENSSTIQRSAQLENQRNTKTQSISG), and 1211 to 1263 (TSAQ…SEAE). Over residues 1313–1323 (PPSPPPFPPPS) the composition is skewed to pro residues. A compositionally biased stretch (polar residues) spans 1433–1451 (SILQSSEGNFNPSDSQSTL). Residues 1467-1756 (QELAKEIVTK…QLRCLTESLP (290 aa)) enclose the ASD2 domain. The segment covering 1529–1538 (SEXKEEKRET) has biased composition (basic and acidic residues). Residues 1653-1708 (RLARVENALSSLGEDASAEERKTWNEKKKQLCGQHEDARELKENLDRREKLVMDFL) are a coiled coil.

It belongs to the shroom family. Interacts with F-actin. Interacts with ROCK1. As to expression, expressed in epithelial cells of the cement gland.

The protein localises to the cell junction. Its subcellular location is the adherens junction. It is found in the cytoplasm. The protein resides in the cytoskeleton. It localises to the apical cell membrane. Controls cell shape changes in the neuroepithelium during neural tube closure. Induces apical constriction in epithelial cells by promoting the apical accumulation of F-actin and myosin II, and probably by bundling stress fibers. Induces apicobasal cell elongation by redistributing gamma-tubulin and directing the assembly of robust apicobasal microtubule arrays. This Xenopus laevis (African clawed frog) protein is Protein Shroom3 (shroom3).